A 248-amino-acid polypeptide reads, in one-letter code: Probable transcriptional regulatory protein Oant_1200 (248 aa).

It belongs to the TACO1 family.

The protein localises to the cytoplasm. The polypeptide is Probable transcriptional regulatory protein Oant_1200 (Brucella anthropi (strain ATCC 49188 / DSM 6882 / CCUG 24695 / JCM 21032 / LMG 3331 / NBRC 15819 / NCTC 12168 / Alc 37) (Ochrobactrum anthropi)).